Here is a 214-residue protein sequence, read N- to C-terminus: Neurogenin-3 (214 aa).

Polar residues predominate over residues 1–14; the sequence is MTPQPSGAPTVQVT. Residues 1 to 98 form a disordered region; the sequence is MTPQPSGAPT…NDRERNRMHN (98 aa). The span at 15-26 shows a compositional bias: basic and acidic residues; it reads RETERSFPRASE. Composition is skewed to basic residues over residues 57–70 and 79–88; these read APRKLRARRGGRSR and KQRRSRRKKA. Residues 83–135 form the bHLH domain; sequence SRRKKANDRERNRMHNLNSALDALRGVLPTFPDDAKLTKIETLRFAHNYIWAL.

In terms of assembly, efficient DNA binding requires dimerization with another bHLH protein. Interacts with ATOH8.

It is found in the nucleus. Acts as a transcriptional regulator. Together with NKX2-2, initiates transcriptional activation of NEUROD1. Involved in neurogenesis. Also required for the specification of a common precursor of the 4 pancreatic endocrine cell types. The sequence is that of Neurogenin-3 (NEUROG3) from Homo sapiens (Human).